Reading from the N-terminus, the 715-residue chain is MSVAHADDADDYSRPTGESYHAEKALPSGDFYTGQWRDNLPHGHGKYLWTDGCMYVGDWHRGKTMGKGRFSWPSGATYEGDFKNGYMDGKGTYIDSSGDLYRGSWVMNLRHGQGTKSYVNGDCYDGEWRRGLQDGHGRYQWKNENHYIGQWKNGLMNGNGTMIWSNGNRYDGSWEDGAPKGNGTFRWSDGSFYVGVWSKDPKEQNGTYYPSTSSGNFDWQPQQVFYVDLSECVVCTCQRIPVLPSQKMPVWYGASEQSSSGNRTKNSERPRRRSVDGRVSNGEMELRSNGSGYLQVDDNAESTRSSLGPLRIQPAKKQGQTISKGHKNYELMLNLQLGIRHSVGRPAPATSLDLKASAFDPKEKLWTKFPSEGSKYTPPHQSCEFKWKDYCPVVFRTLRKLFSVDAADYMLSICGNDALRELSSPGKSGSFFYLTNDDRYMIKTMKKAETKVLIRMLPAYYNHVRACENTLVTKFFGLHCVKLTGTAQKKVRFVIMGNLFCTGHSIHRRFDLKGSSHGRLTTKPESEIDPNTTLKDLDLNFAFRLQKNWFQEFCRQVDRDCEFLEQERIMDYSLLVGLHFREAAIKDSATPTSGARTPTGNSETRLSRAEMDRFLLDASKLASIKLGINMPARVERTARRSDCENQLVGDPTGEFYDVIVYFGIIDILQDYDISKKLEHAYKSMQYDPTSISAVDPKQYSRRFRDFIFRVFVEDA.

Positions 1–13 are enriched in basic and acidic residues; the sequence is MSVAHADDADDYS. The segment at 1 to 21 is disordered; the sequence is MSVAHADDADDYSRPTGESYH. MORN repeat units lie at residues 32 to 54, 55 to 77, 78 to 100, 101 to 123, 124 to 146, 147 to 169, 170 to 192, and 193 to 214; these read YTGQ…DGCM, YVGD…SGAT, YEGD…SGDL, YRGS…NGDC, YDGE…NENH, YIGQ…NGNR, YDGS…DGSF, and YVGV…STSS. Residues 253 to 306 form a disordered region; the sequence is GASEQSSSGNRTKNSERPRRRSVDGRVSNGEMELRSNGSGYLQVDDNAESTRSS. Residues 255 to 264 show a composition bias toward polar residues; it reads SEQSSSGNRT. The span at 265–276 shows a compositional bias: basic and acidic residues; the sequence is KNSERPRRRSVD. The 391-residue stretch at 321 to 711 folds into the PIPK domain; that stretch reads TISKGHKNYE…RFRDFIFRVF (391 aa). Residues 671 to 692 are activation loop; the sequence is YDISKKLEHAYKSMQYDPTSIS.

The catalysed reaction is a 1,2-diacyl-sn-glycero-3-phospho-(1D-myo-inositol 4-phosphate) + ATP = a 1,2-diacyl-sn-glycero-3-phospho-(1D-myo-inositol-4,5-bisphosphate) + ADP + H(+). This chain is Phosphatidylinositol 4-phosphate 5-kinase 6 (PIP5K6), found in Arabidopsis thaliana (Mouse-ear cress).